Reading from the N-terminus, the 443-residue chain is Serine/threonine-protein phosphatase 2A 55 kDa regulatory subunit B beta isoform (443 aa).

4 WD repeats span residues 22-61, 87-128, 171-209, and 220-260; these read TEAD…KNQV, EIEE…KRPE, AHTY…QSFN, and ELTE…LCDR. Serine 275 carries the post-translational modification Phosphoserine. WD repeat units lie at residues 279-317, 334-375, and 410-442; these read EIIS…RPVE, ENDC…DVTL, and DFSK…QDKV. Tyrosine 295 carries the post-translational modification Phosphotyrosine. Threonine 298 carries the post-translational modification Phosphothreonine.

The protein belongs to the phosphatase 2A regulatory subunit B family. As to quaternary structure, PP2A consists of a common heterodimeric core enzyme, composed of a 36 kDa catalytic subunit (subunit C) and a 65 kDa constant regulatory subunit (PR65 or subunit A), that associates with a variety of regulatory subunits. Proteins that associate with the core dimer include three families of regulatory subunits B (the R2/B/PR55/B55, R3/B''/PR72/PR130/PR59 and R5/B'/B56 families), the 48 kDa variable regulatory subunit, viral proteins, and cell signaling molecules. Interacts with IER5 (via N- and C-terminal regions). Interacts with TOMM22. Expressed in the brain. Isoform 1 and isoform 2 are expressed in the forbrain. Isoform 1 is more strongly expressed than isoform 2 in the olfactory bulb. Isoform 1 and isoform 2 are weakly expressed in the cerebellum. Isoform 1 is expressed in the testis. Isoform 2 expression is undetectable at birth rising to adult level at day 14.

Its subcellular location is the cytoplasm. It localises to the cytoskeleton. The protein localises to the membrane. The protein resides in the mitochondrion. It is found in the mitochondrion outer membrane. In terms of biological role, the B regulatory subunit might modulate substrate selectivity and catalytic activity, and might also direct the localization of the catalytic enzyme to a particular subcellular compartment. Within the PP2A holoenzyme complex, isoform 2 is required to promote proapoptotic activity. Isoform 2 regulates neuronal survival through the mitochondrial fission and fusion balance. This Rattus norvegicus (Rat) protein is Serine/threonine-protein phosphatase 2A 55 kDa regulatory subunit B beta isoform (Ppp2r2b).